The sequence spans 208 residues: MGEPAFTSFPSPPVLGKLKRNMMPWALQKKREIHMAKAHRRRAARSALPMRLTSCIFRRPVTRIRSHPDNQVRRRKGDEHLEKPQQLCAYRRLQALQPCSSQGEGSSPLHLESVLSILAPGTAGESLDRAGAERVRSPLEPTPGRFPAVAGGPTPGMGCQLPPPLSGQLVTPADIRRQARRVKKARERLAKALQADRLARQAEMLTCR.

It belongs to the MBD3L family.

The chain is Methyl-CpG-binding domain protein 3-like 3 (MBD3L3) from Homo sapiens (Human).